Consider the following 235-residue polypeptide: MHWAAAVAIFFIVVTKFLQYTNKYHEKWISKFAPGNELSKKYLAKVKERHELKEFNNSISAQDNYAKWTKNNRKLDSLDKEINNLKDEIQSENKAFQAHLHKLRLLALTVPFFVFKIMYGKTPVYKLSSSTSTLFPTFVSGVWSQGWLYVLLHPLRTISQKWHIMEGKFGASKFDDMALQSVSLGIWVWALMNVINGVEFIVKQLFLTPKMEAPASVETQEEKALDAVDDAIILD.

Position 1 (M1) is a topological domain, lumenal. The helical transmembrane segment at 2–21 (HWAAAVAIFFIVVTKFLQYT) threads the bilayer. Over 22–104 (NKYHEKWISK…AFQAHLHKLR (83 aa)) the chain is Cytoplasmic. The stretch at 68-104 (WTKNNRKLDSLDKEINNLKDEIQSENKAFQAHLHKLR) forms a coiled coil. A helical membrane pass occupies residues 105–125 (LLALTVPFFVFKIMYGKTPVY). Residues 126 to 181 (KLSSSTSTLFPTFVSGVWSQGWLYVLLHPLRTISQKWHIMEGKFGASKFDDMALQS) lie on the Lumenal side of the membrane. A helical transmembrane segment spans residues 182–198 (VSLGIWVWALMNVINGV). The Cytoplasmic segment spans residues 199-235 (EFIVKQLFLTPKMEAPASVETQEEKALDAVDDAIILD).

Belongs to the WRB/GET1 family. As to quaternary structure, component of the Golgi to ER traffic (GET) complex, which is composed of GET1, GET2 and GET3. Within the complex, GET1 and GET2 form a heterotetramer which is stabilized by phosphatidylinositol binding and which binds to the GET3 homodimer.

It is found in the endoplasmic reticulum membrane. It localises to the golgi apparatus membrane. Required for the post-translational delivery of tail-anchored (TA) proteins to the endoplasmic reticulum. Together with GET2, acts as a membrane receptor for soluble GET3, which recognizes and selectively binds the transmembrane domain of TA proteins in the cytosol. The GET complex cooperates with the HDEL receptor ERD2 to mediate the ATP-dependent retrieval of resident ER proteins that contain a C-terminal H-D-E-L retention signal from the Golgi to the ER. In Saccharomyces cerevisiae (strain RM11-1a) (Baker's yeast), this protein is Golgi to ER traffic protein 1.